The primary structure comprises 51 residues: MKMKKCPKCGRYTLKDFCSECNEKSVTVKPPRFSPVDKYGKYRRALKKAKM.

It belongs to the NOP10 family.

Its function is as follows. Involved in ribosome biogenesis; more specifically in 18S rRNA pseudouridylation and in cleavage of pre-rRNA. The chain is Ribosome biogenesis protein Nop10 from Methanococcus maripaludis (strain C5 / ATCC BAA-1333).